A 396-amino-acid chain; its full sequence is Probable glucan endo-1,6-beta-glucosidase B (396 aa).

The first 17 residues, M1–A17, serve as a signal peptide directing secretion. Residue N30 is glycosylated (N-linked (GlcNAc...) asparagine). The Proton donor role is filled by E219. N272 carries N-linked (GlcNAc...) asparagine glycosylation. E320 acts as the Nucleophile in catalysis.

It belongs to the glycosyl hydrolase 5 (cellulase A) family.

It localises to the secreted. The catalysed reaction is Random hydrolysis of (1-&gt;6)-linkages in (1-&gt;6)-beta-D-glucans.. In terms of biological role, beta-glucanases participate in the metabolism of beta-glucan, the main structural component of the cell wall. Acts on lutean, pustulan and 1,6-oligo-beta-D-glucosides. The polypeptide is Probable glucan endo-1,6-beta-glucosidase B (exgB) (Aspergillus fumigatus (strain ATCC MYA-4609 / CBS 101355 / FGSC A1100 / Af293) (Neosartorya fumigata)).